A 61-amino-acid chain; its full sequence is Small ribosomal subunit protein uS14 (61 aa).

Residues Cys24, Cys27, Cys40, and Cys43 each coordinate Zn(2+).

Belongs to the universal ribosomal protein uS14 family. Zinc-binding uS14 subfamily. Part of the 30S ribosomal subunit. Contacts proteins S3 and S10. Requires Zn(2+) as cofactor.

Its function is as follows. Binds 16S rRNA, required for the assembly of 30S particles and may also be responsible for determining the conformation of the 16S rRNA at the A site. In Heliobacterium modesticaldum (strain ATCC 51547 / Ice1), this protein is Small ribosomal subunit protein uS14.